The chain runs to 788 residues: Pre-rRNA-processing protein TSR1 homolog (788 aa).

Positions 1-40 (MSTTGHRAGVFKKPAKPHKSWKGKRTKGEITTENRGREGV) are disordered. The segment covering 9–25 (GVFKKPAKPHKSWKGKR) has biased composition (basic residues). Residues 26 to 40 (TKGEITTENRGREGV) are compositionally biased toward basic and acidic residues. Residues 83–243 (APCLVTILSL…LRTLNETKKK (161 aa)) enclose the Bms1-type G domain. Residues 354–433 (LEEADKEMRR…ASEMMFHDEI (80 aa)) form a disordered region. Residues 378-412 (DDSEDDEDEEDEDEDMDDEEEDKDLEEDDEEEDTP) are compositionally biased toward acidic residues.

Belongs to the TRAFAC class translation factor GTPase superfamily. Bms1-like GTPase family. TSR1 subfamily.

It localises to the nucleus. Its subcellular location is the nucleolus. Functionally, required during maturation of the 40S ribosomal subunit in the nucleolus. The chain is Pre-rRNA-processing protein TSR1 homolog from Caenorhabditis briggsae.